The following is a 748-amino-acid chain: tRNA endonuclease ANKZF1 (748 aa).

A C2H2-type zinc finger spans residues 96–120 (LFCSACDQIFQNHQEQREHYKLDWH). Residues 135–185 (SASDFEQQSSTGDLSSISGSDDTDSSSEEDLLPLDEGRAESEKPNRPPGFY) are disordered. Residues 143–154 (SSTGDLSSISGS) show a composition bias toward low complexity. Positions 155–167 (DDTDSSSEEDLLP) are enriched in acidic residues. Basic and acidic residues predominate over residues 169–179 (DEGRAESEKPN). Residues 227-370 (GPRYYVVLMA…QRVLHKLTTL (144 aa)) enclose the VLRF1 domain. The active site involves glutamine 270. Residues serine 282 and serine 385 each carry the phosphoserine modification. Basic and acidic residues predominate over residues 383 to 408 (FHSPETHWKPVREERKKDTEKEKTKV). Disordered regions lie at residues 383 to 438 (FHSP…SEVE) and 460 to 497 (RRRR…TQEV). Residues 429 to 438 (SQEEDGSEVE) are compositionally biased toward acidic residues. Over residues 484-497 (QPQDEPFSQPTQEV) the composition is skewed to polar residues. One copy of the ANK 1 repeat lies at 515 to 545 (ELWDTLLAACRAGEVEVLKLQLATGLVDPGV). Serine 555 carries the post-translational modification Phosphoserine. An ANK 2 repeat occupies 556–585 (GGFTLLHAAAAAGRGLVVRLLLEAGADPTV). The disordered stretch occupies residues 621-677 (KARVPGPLTQEMEARQATRKKEQKAARRQREQQQRKQREQEEQEQEEQRRFAALSDR). Positions 628 to 681 (LTQEMEARQATRKKEQKAARRQREQQQRKQREQEEQEQEEQRRFAALSDREKRA) form a coiled coil. The residue at position 629 (threonine 629) is a Phosphothreonine. Residues 632–677 (MEARQATRKKEQKAARRQREQQQRKQREQEEQEQEEQRRFAALSDR) show a composition bias toward basic and acidic residues. The VCP/p97-interacting motif (VIM) stretch occupies residues 654-666 (QRKQREQEEQEQE). Serine 702 carries the post-translational modification Phosphoserine.

It belongs to the ANKZF1/VMS1 family. Interacts (via VIM motif) with VCP.

The protein localises to the cytoplasm. In terms of biological role, endonuclease that cleaves polypeptidyl-tRNAs downstream of the ribosome-associated quality control (RQC) pathway to release incompletely synthesized polypeptides for degradation. The RQC pathway disassembles aberrantly stalled translation complexes to recycle or degrade the constituent parts. ANKZF1 acts downstream disassembly of stalled ribosomes and specifically cleaves off the terminal 3'-CCA nucleotides universal to all tRNAs from polypeptidyl-tRNAs, releasing (1) ubiquitinated polypeptides from 60S ribosomal subunit for degradation and (2) cleaved tRNAs. ANKZF1-cleaved tRNAs are then repaired and recycled by ELAC1 and TRNT1. Also plays a role in the cellular response to hydrogen peroxide and in the maintenance of mitochondrial integrity under conditions of cellular stress. In Mus musculus (Mouse), this protein is tRNA endonuclease ANKZF1.